Reading from the N-terminus, the 308-residue chain is Serine/threonine-protein phosphatase PP1 (308 aa).

The Mn(2+) site is built by Asp64, His66, Asp92, and Asn124. His125 (proton donor) is an active-site residue. Positions 173 and 248 each coordinate Mn(2+).

Belongs to the PPP phosphatase family. PP-1 subfamily. The cofactor is Mn(2+).

It localises to the cytoplasm. The enzyme catalyses O-phospho-L-seryl-[protein] + H2O = L-seryl-[protein] + phosphate. It catalyses the reaction O-phospho-L-threonyl-[protein] + H2O = L-threonyl-[protein] + phosphate. The chain is Serine/threonine-protein phosphatase PP1 (pph-3) from Neurospora crassa (strain ATCC 24698 / 74-OR23-1A / CBS 708.71 / DSM 1257 / FGSC 987).